The following is a 415-amino-acid chain: 3-isopropylmalate dehydratase large subunit (415 aa).

Residues C295, C353, and C356 each coordinate [4Fe-4S] cluster.

The protein belongs to the aconitase/IPM isomerase family. LeuC type 2 subfamily. In terms of assembly, heterodimer of LeuC and LeuD. Requires [4Fe-4S] cluster as cofactor.

It carries out the reaction (2R,3S)-3-isopropylmalate = (2S)-2-isopropylmalate. It functions in the pathway amino-acid biosynthesis; L-leucine biosynthesis; L-leucine from 3-methyl-2-oxobutanoate: step 2/4. Catalyzes the isomerization between 2-isopropylmalate and 3-isopropylmalate, via the formation of 2-isopropylmaleate. This is 3-isopropylmalate dehydratase large subunit from Pyrobaculum neutrophilum (strain DSM 2338 / JCM 9278 / NBRC 100436 / V24Sta) (Thermoproteus neutrophilus).